Here is a 105-residue protein sequence, read N- to C-terminus: UPF0235 protein A1E_05380 (105 aa).

This sequence belongs to the UPF0235 family.

In Rickettsia canadensis (strain McKiel), this protein is UPF0235 protein A1E_05380.